The following is a 360-amino-acid chain: Peptide chain release factor 1 (360 aa).

Position 235 is an N5-methylglutamine (glutamine 235).

Belongs to the prokaryotic/mitochondrial release factor family. In terms of processing, methylated by PrmC. Methylation increases the termination efficiency of RF1.

It localises to the cytoplasm. Peptide chain release factor 1 directs the termination of translation in response to the peptide chain termination codons UAG and UAA. The protein is Peptide chain release factor 1 of Burkholderia thailandensis (strain ATCC 700388 / DSM 13276 / CCUG 48851 / CIP 106301 / E264).